The primary structure comprises 299 residues: Oxygen-dependent coproporphyrinogen-III oxidase (299 aa).

A substrate-binding site is contributed by Ser92. A divalent metal cation-binding residues include His96 and His106. The active-site Proton donor is the His106. Asn108 to Arg110 lines the substrate pocket. The a divalent metal cation site is built by His145 and His175. The important for dimerization stretch occupies residues Tyr240–Glu275. Position 258–260 (Gly258–Arg260) interacts with substrate.

This sequence belongs to the aerobic coproporphyrinogen-III oxidase family. Homodimer. A divalent metal cation is required as a cofactor.

The protein localises to the cytoplasm. It catalyses the reaction coproporphyrinogen III + O2 + 2 H(+) = protoporphyrinogen IX + 2 CO2 + 2 H2O. Its pathway is porphyrin-containing compound metabolism; protoporphyrin-IX biosynthesis; protoporphyrinogen-IX from coproporphyrinogen-III (O2 route): step 1/1. Involved in the heme biosynthesis. Catalyzes the aerobic oxidative decarboxylation of propionate groups of rings A and B of coproporphyrinogen-III to yield the vinyl groups in protoporphyrinogen-IX. The sequence is that of Oxygen-dependent coproporphyrinogen-III oxidase from Shigella boydii serotype 18 (strain CDC 3083-94 / BS512).